The sequence spans 542 residues: Polysialoglycoprotein (542 aa).

The first 21 residues, 1 to 21, serve as a signal peptide directing secretion; it reads MIMGGVRELLLVVMTVGVVKV. The propeptide occupies 22–120; sequence SCYPVGKSQK…TSEAATGPSG (99 aa). A disordered region spans residues 70-542; it reads EEYLETNEVE…GPSGDDAMDI (473 aa). A compositionally biased stretch (polar residues) spans 78–95; it reads VESQASPNHGSSPANDAL. The segment covering 97-106 has biased composition (basic and acidic residues); the sequence is SEEKLRRVSS. Residues 107 to 116 show a composition bias toward low complexity; that stretch reads DDAATSEAAT. Tandem repeats lie at residues 121–133, 134–146, 147–159, 160–172, 173–185, 186–198, 199–211, 212–224, 225–237, 238–250, 251–263, 264–276, 277–289, 290–302, 303–315, 316–328, 329–341, 342–354, 355–367, 368–380, 381–393, 394–406, 407–419, 420–432, 433–445, 446–458, 459–471, 472–484, 485–497, 498–510, 511–523, and 524–536. Residues 121–536 are 32 X 13 AA tandem repeats of D-D-A-T-S-E-A-A-T-G-P-S-G; that stretch reads DDATSEAATG…TSEAATGPSG (416 aa). An O-linked (GalNAc...) threonine glycan is attached at Thr124. Ser125 carries O-linked (GalNAc...) serine glycosylation. Thr129 and Thr137 each carry an O-linked (GalNAc...) threonine glycan. Ser138 carries an O-linked (GalNAc...) serine glycan. O-linked (GalNAc...) threonine glycosylation is found at Thr142 and Thr150. An O-linked (GalNAc...) serine glycan is attached at Ser151. O-linked (GalNAc...) threonine glycans are attached at residues Thr155 and Thr163. O-linked (GalNAc...) serine glycosylation is present at Ser164. 2 O-linked (GalNAc...) threonine glycosylation sites follow: Thr168 and Thr176. A glycan (O-linked (GalNAc...) serine) is linked at Ser177. 2 O-linked (GalNAc...) threonine glycosylation sites follow: Thr181 and Thr189. Ser190 carries an O-linked (GalNAc...) serine glycan. 2 O-linked (GalNAc...) threonine glycosylation sites follow: Thr194 and Thr202. Ser203 is a glycosylation site (O-linked (GalNAc...) serine). Residues Thr207 and Thr215 are each glycosylated (O-linked (GalNAc...) threonine). Ser216 carries an O-linked (GalNAc...) serine glycan. Residues Thr220 and Thr228 are each glycosylated (O-linked (GalNAc...) threonine). A glycan (O-linked (GalNAc...) serine) is linked at Ser229. O-linked (GalNAc...) threonine glycosylation is found at Thr233 and Thr241. Ser242 carries an O-linked (GalNAc...) serine glycan. O-linked (GalNAc...) threonine glycans are attached at residues Thr246 and Thr254. O-linked (GalNAc...) serine glycosylation is present at Ser255. O-linked (GalNAc...) threonine glycans are attached at residues Thr259 and Thr267. Ser268 carries O-linked (GalNAc...) serine glycosylation. O-linked (GalNAc...) threonine glycans are attached at residues Thr272 and Thr280. Residue Ser281 is glycosylated (O-linked (GalNAc...) serine). Residues Thr285 and Thr293 are each glycosylated (O-linked (GalNAc...) threonine). Ser294 is a glycosylation site (O-linked (GalNAc...) serine). O-linked (GalNAc...) threonine glycans are attached at residues Thr298 and Thr306. Ser307 carries O-linked (GalNAc...) serine glycosylation. 2 O-linked (GalNAc...) threonine glycosylation sites follow: Thr311 and Thr319. Ser320 is a glycosylation site (O-linked (GalNAc...) serine). O-linked (GalNAc...) threonine glycans are attached at residues Thr324 and Thr332. The O-linked (GalNAc...) serine glycan is linked to Ser333. 2 O-linked (GalNAc...) threonine glycosylation sites follow: Thr337 and Thr345. Ser346 carries O-linked (GalNAc...) serine glycosylation. Thr350 and Thr358 each carry an O-linked (GalNAc...) threonine glycan. Ser359 carries an O-linked (GalNAc...) serine glycan. 2 O-linked (GalNAc...) threonine glycosylation sites follow: Thr363 and Thr371. An O-linked (GalNAc...) serine glycan is attached at Ser372. Residues Thr376 and Thr384 are each glycosylated (O-linked (GalNAc...) threonine). Ser385 carries O-linked (GalNAc...) serine glycosylation. O-linked (GalNAc...) threonine glycans are attached at residues Thr389 and Thr397. Ser398 carries an O-linked (GalNAc...) serine glycan. 2 O-linked (GalNAc...) threonine glycosylation sites follow: Thr402 and Thr410. A glycan (O-linked (GalNAc...) serine) is linked at Ser411. Residues Thr415 and Thr423 are each glycosylated (O-linked (GalNAc...) threonine). The O-linked (GalNAc...) serine glycan is linked to Ser424. 2 O-linked (GalNAc...) threonine glycosylation sites follow: Thr428 and Thr436. An O-linked (GalNAc...) serine glycan is attached at Ser437. 2 O-linked (GalNAc...) threonine glycosylation sites follow: Thr441 and Thr449. Ser450 carries an O-linked (GalNAc...) serine glycan. 2 O-linked (GalNAc...) threonine glycosylation sites follow: Thr454 and Thr462. Ser463 carries O-linked (GalNAc...) serine glycosylation. Thr467 and Thr475 each carry an O-linked (GalNAc...) threonine glycan. An O-linked (GalNAc...) serine glycan is attached at Ser476. O-linked (GalNAc...) threonine glycans are attached at residues Thr480 and Thr488. Ser489 carries O-linked (GalNAc...) serine glycosylation. O-linked (GalNAc...) threonine glycans are attached at residues Thr493 and Thr501. Ser502 is a glycosylation site (O-linked (GalNAc...) serine). Residues Thr506 and Thr514 are each glycosylated (O-linked (GalNAc...) threonine). O-linked (GalNAc...) serine glycosylation is present at Ser515. Residues Thr519 and Thr527 are each glycosylated (O-linked (GalNAc...) threonine). Ser528 carries an O-linked (GalNAc...) serine glycan. O-linked (GalNAc...) threonine glycosylation is present at Thr532. A propeptide spanning residues 537–542 is cleaved from the precursor; sequence DDAMDI.

In terms of processing, most sialic acid residues exist in the form of polysialyl groups partly capped with deaminoneuraminic acid. As to expression, cortical alveoli of immature ovaries.

In response to egg activation, PSGP is discharged by exocytosis into the perivitelline space, where it undergoes rapid proteolysis into glycotridecapeptides. During fertilization and/or early development the glycotridecapeptides prevent polyspermy or are involved in the formation of a fertilization membrane. This Oncorhynchus mykiss (Rainbow trout) protein is Polysialoglycoprotein.